The following is a 1147-amino-acid chain: MEGVRQKCRPKHQVLVLKCYPQYQKGVQVVKPNSSELSYLLYYVSTRRSKLTKVGAFLEKRAARDVWRRKIGNVQVTLQILSALIEKVPRDLPIYARSVMTVLETVVRSQDISMVEDSIETFETFCRHQDMAALSAEQDFATQYREVVRSYAGFAEGDPSTQSKLAAGPPLTVRWKTAGLRAIKGVVSSEAGLAADGGDSIRVILPVILENLYSPEDNLVGSLELKLLEADKNESETAHRRRVSTATVETVDAVEGDASLAAQNTADMDRKAEMDMRLLALRCLEQIVVNGSSRGQIRVTTQVVLDFILRKSRVTGNGLGHNHKDSWATSLIELIAKWCPVQVRFIILVAAMDILHDIPPTEESLDESFAITYLIDRLLKSPVNMIGLSVIDVLLGLLRHMSFLISPSRAGKSTPDEKQNGHSNALELSVKRTEVLSLLQDCIGNLTTHIYYGEQVVDMVRTILTRFRPSRGNEQAITSSPTQSDVLGGASAMISSGEDGLIAFSLPNAKITALRAIKNILLVANTKRPGFTVTTESRHQVGLYVWEGTQWLLSEPDRDVRYAYVDAFLTWLNLETSTDDLKVKERTGRPASQPAKNDLSDPTERPGKRTASMSGNQREKVILIAQSNFLRLLHLTIFDLATDHPTSVSEITLLHLLLVSLVKHLGVNAVRFGLPMVLKLQDNMTTGDGQSFPALVNIGSLVYGYLWALSEKFDLDTSRIGNGIQSEVQKRQQLGVWLETIRLPPVNLDKIIHNSNVQASGRGAQDVSLLIPFDGGEELIQRIEASYGSFITLLTHSPPSSPGSVGSPPRSITAPVLPHVSASAATPKANVLPPAVREQMLSPWSREACLAAAENERAEAKSLSRSRTGTLVMRNHVHQNGTSSPSASSNASVPQSAYASAAGLQNAQRTSVPNSSGSQLISTSRESPVHVNELRRVLSVNEEGKARRMSPLRGRLDGSNRSVISSSSDSMVSGYSLSEFDDGASVKPQSTRGGRISLDGEETPKASALSFMADTNDIPPVPPIPPSISIQGGLTDGRQRSVSASRPSTAPGPRRPSVTNGKAGTPSTSPGRSLSRDKSRSSTGLAAAATDGVEPNAEKIDSARLDVQKLLDGFLSPADAETRGSRRKARSNTGRRGVSGGLGRPPY.

4 disordered regions span residues 582 to 615 (KVKE…SMSG), 877 to 929 (VHQN…ESPV), 942 to 1097 (EEGK…EPNA), and 1114 to 1147 (FLSP…RPPY). The segment covering 598–607 (DLSDPTERPG) has biased composition (basic and acidic residues). Residues 883 to 897 (SSPSASSNASVPQSA) show a composition bias toward low complexity. Residues 903–926 (GLQNAQRTSVPNSSGSQLISTSRE) show a composition bias toward polar residues. Residues 959-978 (SNRSVISSSSDSMVSGYSLS) are compositionally biased toward low complexity. Residues 1057 to 1072 (SVTNGKAGTPSTSPGR) show a composition bias toward polar residues. Over residues 1137–1147 (GVSGGLGRPPY) the composition is skewed to gly residues.

Belongs to the EFR3 family.

This is Protein efr3 (efr3) from Aspergillus oryzae (strain ATCC 42149 / RIB 40) (Yellow koji mold).